The chain runs to 551 residues: Protein MTL1 (551 aa).

Positions 1–35 are cleaved as a signal peptide; that stretch reads MASCNPTRKKSSASSLSMWRTILMALTTLPLSVLS. The Extracellular portion of the chain corresponds to 36–361; sequence QELVPANSTT…HSGLSKKNRN (326 aa). 3 disordered regions span residues 108–143, 206–227, and 243–263; these read MQVS…IISS, PSSS…SYSS, and SSSS…SSSS. The helical transmembrane segment at 362–382 threads the bilayer; it reads IIIGCVVGIGAPLILILLILI. At 383-551 the chain is on the cytoplasmic side; the sequence is YMFCVQPKKT…PNNGLNITNY (169 aa). A disordered region spans residues 429 to 513; sequence SSDSPIGSNN…SNSNSQDYND (85 aa). Over residues 430–441 the composition is skewed to polar residues; that stretch reads SDSPIGSNNIQN. Acidic residues predominate over residues 466–477; it reads GYDDDDDDDAND. Residues S481 and S482 each carry the phosphoserine modification. Residues 498-508 show a composition bias toward low complexity; sequence SASYSMSNSNS.

This sequence belongs to the MID2 like cell wall stress sensor family.

It localises to the membrane. Its function is as follows. Involved in cell integrity signaling during vegetative growth at elevated temperature. Acts positively on the PKC1-MAPK pathway. Cell membrane sensor of oxidative stress in the cell integrity pathway upstream of PKC1. Required to transmit the oxidative signal to SLT2 and to restore the correct actin organization following oxidative stress. Multicopy suppressor of 1,3-beta-glucan synthase (GS) mutation. Also suppresses RGD1 null mutations. The protein is Protein MTL1 (MTL1) of Saccharomyces cerevisiae (strain ATCC 204508 / S288c) (Baker's yeast).